Here is a 699-residue protein sequence, read N- to C-terminus: Epithelial sodium channel subunit alpha (699 aa).

Positions 1 to 71 (MLDHTRAPEL…EPRQPTEEEE (71 aa)) are disordered. At 1–110 (MLDHTRAPEL…CSKHNRMKTA (110 aa)) the chain is on the cytoplasmic side. A helical transmembrane segment spans residues 111-131 (FWAVLWLCTFGMMYWQFALLF). At 132–589 (EEYFSYPVSL…SQWSLWFGSS (458 aa)) the chain is on the extracellular side. Disulfide bonds link Cys158-Cys332, Cys256-Cys263, Cys309-Cys316, Cys421-Cys506, Cys443-Cys483, Cys443-Cys502, Cys447-Cys498, Cys456-Cys483, Cys456-Cys506, and Cys458-Cys472. The segment at 200-270 (RRRSTRDLRG…SDCFYQTYSS (71 aa)) is gating release of inhibition by proteolysis (GRIP); protease-sensitive region that is responsible for the proteolytic activation of the channel. Positions 211–244 (LPHPLQRLRTPPPPNPARSARSASSSVRDNNPQV) are disordered. A compositionally biased stretch (low complexity) spans 227 to 238 (ARSARSASSSVR). Residues 590-610 (VLSVVEMAELIFDLLVITLIM) form a helical membrane-spanning segment. The Cytoplasmic portion of the chain corresponds to 611-699 (LLHRFRSRYW…SSACAPAMAL (89 aa)). Positions 637–699 (ASSFPSRFCP…SSACAPAMAL (63 aa)) are disordered. Low complexity predominate over residues 656 to 667 (PQQGTTPPLALT). Positions 669-673 (PPPAY) match the PY motif; recruits WW domain-containing proteins and is thereby required for ubiquitination and inhibition of the channel by NEDD4 and NEDD4L motif.

It belongs to the amiloride-sensitive sodium channel (TC 1.A.6) family. SCNN1A subfamily. Heterotrimer; containing an alpha/SCNN1A, a beta/SCNN1B and a gamma/SCNN1G subunit. Interacts with WWP1 (via WW domains). Interacts with WWP2 (via WW domains); inhibits the channel. Interacts with BPIFA1; the interaction is indirect via SCNN1B and inhibits the proteolytic processing of SCNN1A and SCNN1G and the activation of ENaC. Interacts with the full-length immature form of PCSK9 (pro-PCSK9). In terms of processing, ubiquitinated. Can be ubiquitinated at multiple sites and undergo monoubiquitination and polyubiquitination. Ubiquitination by NEDD4 or NEDD4L inhibits the ENaC channel through endocytosis, intracellular retention and degradation of its individual subunits. Post-translationally, ENaC is activated through the proteolytic maturation of its subunits. Furin cleaves the SCNN1A subunit, which results in a stepwise increase in the open probability of the channel due to the release of an inhibitory tract. BPIFA1, which is recruited by the SCNN1B subunit, prevents the proteolytic activation of ENaC. N-glycosylated. Expressed in kidney (at protein level). Expressed in lung (at protein level). Expressed in the epididymis (at protein level). In the caput and corpus regions of the epididymis, expressed uniformly on the luminal and basal surfaces of the ducts and in the sperm in the duct lumen. Also expressed in distal colon and, at low levels, in liver.

It is found in the apical cell membrane. It localises to the cell projection. The protein localises to the cilium. Its subcellular location is the cytoplasmic granule. The protein resides in the cytoplasm. It is found in the cytoplasmic vesicle. It localises to the secretory vesicle. The protein localises to the acrosome. Its subcellular location is the flagellum. The enzyme catalyses Na(+)(in) = Na(+)(out). With respect to regulation, originally identified and characterized by its inhibition by the diuretic drug amiloride. Functionally, this is one of the three pore-forming subunits of the heterotrimeric epithelial sodium channel (ENaC), a critical regulator of sodium balance and fluid homeostasis. ENaC operates in epithelial tissues, where it mediates the electrodiffusion of sodium ions from extracellular fluid through the apical membrane of cells, with water following osmotically. It plays a key role in maintaining sodium homeostasis through electrogenic sodium reabsorption in the kidneys. Additionally, ENaC is essential for airway surface liquid homeostasis, which is crucial for proper mucus clearance. This Mus musculus (Mouse) protein is Epithelial sodium channel subunit alpha.